A 575-amino-acid polypeptide reads, in one-letter code: Dual specificity protein phosphatase YVH1 (575 aa).

Residues 185–213 (KHNNNNNNNNNNNNNNNNNNNNNNCCTFK) are disordered. The span at 187–208 (NNNNNNNNNNNNNNNNNNNNNN) shows a compositional bias: low complexity. The region spanning 283-435 (NYKINQEEDT…LLLYEKMNYT (153 aa)) is the Tyrosine-protein phosphatase domain. Residue cysteine 379 is the Phosphocysteine intermediate of the active site. 2 residues coordinate Zn(2+): cysteine 476 and cysteine 530.

The protein belongs to the protein-tyrosine phosphatase family. Non-receptor class dual specificity subfamily. As to quaternary structure, interacts with PES. Zn(2+) is required as a cofactor.

Its subcellular location is the cytoplasm. The protein localises to the nucleus. The catalysed reaction is O-phospho-L-tyrosyl-[protein] + H2O = L-tyrosyl-[protein] + phosphate. The enzyme catalyses O-phospho-L-seryl-[protein] + H2O = L-seryl-[protein] + phosphate. In terms of biological role, dual specificity protein phosphatase which dephosphorylates both phosphotyrosine and phosphoserine residues. This Plasmodium falciparum (isolate 3D7) protein is Dual specificity protein phosphatase YVH1.